The chain runs to 86 residues: RNA-binding protein Hfq (86 aa).

The Sm domain maps to D9–V69.

This sequence belongs to the Hfq family. In terms of assembly, homohexamer.

In terms of biological role, RNA chaperone that binds small regulatory RNA (sRNAs) and mRNAs to facilitate mRNA translational regulation in response to envelope stress, environmental stress and changes in metabolite concentrations. Also binds with high specificity to tRNAs. This Thermosipho melanesiensis (strain DSM 12029 / CIP 104789 / BI429) protein is RNA-binding protein Hfq.